The following is a 343-amino-acid chain: MKALVFHSPEKATFEQRDVPTPRPGEALVHIAYNSICGSDLSLYRGVWHGFGYPVVPGHEWSGTVVEINGANGHDQSLVGKNVVGDLTCACGNCAACGRGTPVLCENLQELGFTKDGACAEYMTIPVDNLRPLPDALSLRSACQVEPLAVALNAVSIAGVAPGDRVAVMGAGGIGLMLMQVARHLGGEVTVVSEPVAERRAVAGQLGATELCSAEPGQLAELVARRPELTPDVVLEASGYPAALQEAIEVVRPGGRIGLIGYRVEETGPMSPQHIAVKALTLRGSLGPGGRFDDAVELLAKGDDIAVEPLLSHEFGLADYATALDLALSRTNGNVRSFFNLRD.

Positions 37, 59, 91, 94, 97, 105, and 146 each coordinate Zn(2+).

Belongs to the zinc-containing alcohol dehydrogenase family. DOIA dehydrogenase subfamily. Zn(2+) serves as cofactor.

It catalyses the reaction 2-deoxy-scyllo-inosamine + NADP(+) = 3-amino-2,3-dideoxy-scyllo-inosose + NADPH + H(+). The enzyme catalyses 2-deoxy-scyllo-inosamine + NAD(+) = 3-amino-2,3-dideoxy-scyllo-inosose + NADH + H(+). It functions in the pathway metabolic intermediate biosynthesis; 2-deoxystreptamine biosynthesis; 2-deoxystreptamine from D-glucose 6-phosphate: step 3/4. The protein operates within antibiotic biosynthesis; kanamycin biosynthesis. Functionally, catalyzes the oxidation of 2-deoxy-scyllo-inosamine (DOIA) with NAD(+) or NADP(+), forming 3-amino-2,3-dideoxy-scyllo-inosose (amino-DOI). The protein is 2-deoxy-scyllo-inosamine dehydrogenase (kanE) of Streptomyces kanamyceticus.